The chain runs to 396 residues: Chorismate synthase (396 aa).

NADP(+) contacts are provided by Arg40 and Arg46. FMN-binding positions include 134-136, 257-258, Gly302, 317-321, and Arg343; these read RSS, QA, and KPIPS.

Belongs to the chorismate synthase family. As to quaternary structure, homotetramer. FMNH2 is required as a cofactor.

The catalysed reaction is 5-O-(1-carboxyvinyl)-3-phosphoshikimate = chorismate + phosphate. It participates in metabolic intermediate biosynthesis; chorismate biosynthesis; chorismate from D-erythrose 4-phosphate and phosphoenolpyruvate: step 7/7. Its function is as follows. Catalyzes the anti-1,4-elimination of the C-3 phosphate and the C-6 proR hydrogen from 5-enolpyruvylshikimate-3-phosphate (EPSP) to yield chorismate, which is the branch point compound that serves as the starting substrate for the three terminal pathways of aromatic amino acid biosynthesis. This reaction introduces a second double bond into the aromatic ring system. The protein is Chorismate synthase of Bifidobacterium animalis subsp. lactis (strain AD011).